A 179-amino-acid chain; its full sequence is MNRLHTRYNKEIAPALKNQLGVKNVMQVPRLEKITLSVCLSEAVQNPKILNTVVDEITAITGQKAVITKAKKAISNFKLRAGIPLGVRVTLRREKMWSFMDRLNTLALPRVRDFRGLPNKGFDGRGNYNMGLKEQIVFPEINYDKVDKTRGMNITICTTAKNDTEGRALLEALGMPFRK.

It belongs to the universal ribosomal protein uL5 family. As to quaternary structure, part of the 50S ribosomal subunit; part of the 5S rRNA/L5/L18/L25 subcomplex. Contacts the 5S rRNA and the P site tRNA. Forms a bridge to the 30S subunit in the 70S ribosome.

Its function is as follows. This is one of the proteins that bind and probably mediate the attachment of the 5S RNA into the large ribosomal subunit, where it forms part of the central protuberance. In the 70S ribosome it contacts protein S13 of the 30S subunit (bridge B1b), connecting the 2 subunits; this bridge is implicated in subunit movement. Contacts the P site tRNA; the 5S rRNA and some of its associated proteins might help stabilize positioning of ribosome-bound tRNAs. This Bdellovibrio bacteriovorus (strain ATCC 15356 / DSM 50701 / NCIMB 9529 / HD100) protein is Large ribosomal subunit protein uL5.